The sequence spans 258 residues: Ciliogenesis and planar polarity effector 2 (258 aa).

A small GTPase-like region spans residues 51–258; it reads IDTASYKIFV…LPSSPESAPG (208 aa). GTP-binding residues include serine 64, glycine 65, glycine 67, lysine 68, threonine 69, alanine 70, isoleucine 82, histidine 84, threonine 87, lysine 176, aspartate 178, and serine 206.

The protein belongs to the small GTPase superfamily. Rab family. As to quaternary structure, interacts with FUZ. Associates with the CPLANE (ciliogenesis and planar polarity effectors) complex via its interaction with FUZ.

The protein resides in the cytoplasm. The protein localises to the cytoskeleton. It localises to the cilium basal body. It is found in the microtubule organizing center. Its subcellular location is the centrosome. The protein resides in the centriole. In terms of biological role, required for efficient primary cilia initiation, regulating a late step in cilia initiation. Plays a role in the final maturation of the mother centriole and ciliary vesicle that allows extension of the ciliary axoneme. This is Ciliogenesis and planar polarity effector 2 (Cplane2) from Mus musculus (Mouse).